Consider the following 137-residue polypeptide: Probable 4-amino-4-deoxy-L-arabinose-phosphoundecaprenol flippase subunit ArnF (137 aa).

At 1-5 the chain is on the cytoplasmic side; the sequence is MNVPR. Residues 6 to 26 form a helical membrane-spanning segment; it reads GWLAALGSVLLVSAAQLGMRW. Topologically, residues 27–44 are periplasmic; the sequence is GMSRLPLPEAWAGQTPEH. A helical membrane pass occupies residues 45 to 65; the sequence is AALLAVALAVAAYAASLLCWL. The Cytoplasmic segment spans residues 66 to 76; that stretch reads AALRHLPLGRA. A helical membrane pass occupies residues 77–97; sequence YSLLSASYALVYLLAASLPAF. Residues 98-100 are Periplasmic-facing; the sequence is EET. A helical transmembrane segment spans residues 101 to 121; the sequence is FTTGKTLGVGLVVLGVLTVNA. Residues 122-137 lie on the Cytoplasmic side of the membrane; it reads RRTAAAPAHHPSRKAL.

The protein belongs to the ArnF family. As to quaternary structure, heterodimer of ArnE and ArnF.

It is found in the cell inner membrane. It functions in the pathway bacterial outer membrane biogenesis; lipopolysaccharide biosynthesis. In terms of biological role, translocates 4-amino-4-deoxy-L-arabinose-phosphoundecaprenol (alpha-L-Ara4N-phosphoundecaprenol) from the cytoplasmic to the periplasmic side of the inner membrane. The sequence is that of Probable 4-amino-4-deoxy-L-arabinose-phosphoundecaprenol flippase subunit ArnF from Pseudomonas paraeruginosa (strain DSM 24068 / PA7) (Pseudomonas aeruginosa (strain PA7)).